The following is a 151-amino-acid chain: Deoxyuridine 5'-triphosphate nucleotidohydrolase (151 aa).

Arginine 28 is a Mg(2+) binding site. Residues 72–74, 86–89, tyrosine 92, glycine 97, isoleucine 99, and arginine 115 contribute to the dUTP site; these read PRS and GVID.

Belongs to the dUTPase family. Requires Mg(2+) as cofactor.

The catalysed reaction is dUTP + H2O = dUMP + diphosphate + H(+). Its function is as follows. This enzyme is involved in nucleotide metabolism: it produces dUMP, the immediate precursor of thymidine nucleotides and it decreases the intracellular concentration of dUTP so that uracil cannot be incorporated into DNA. The polypeptide is Deoxyuridine 5'-triphosphate nucleotidohydrolase (OPG046) (Monkeypox virus).